Here is a 219-residue protein sequence, read N- to C-terminus: ATP-dependent Clp protease proteolytic subunit 1 (219 aa).

The Nucleophile role is filled by S113. H138 is a catalytic residue.

It belongs to the peptidase S14 family. In terms of assembly, fourteen ClpP subunits assemble into 2 heptameric rings which stack back to back to give a disk-like structure with a central cavity, resembling the structure of eukaryotic proteasomes.

It is found in the cytoplasm. It carries out the reaction Hydrolysis of proteins to small peptides in the presence of ATP and magnesium. alpha-casein is the usual test substrate. In the absence of ATP, only oligopeptides shorter than five residues are hydrolyzed (such as succinyl-Leu-Tyr-|-NHMec, and Leu-Tyr-Leu-|-Tyr-Trp, in which cleavage of the -Tyr-|-Leu- and -Tyr-|-Trp bonds also occurs).. Cleaves peptides in various proteins in a process that requires ATP hydrolysis. Has a chymotrypsin-like activity. Plays a major role in the degradation of misfolded proteins. Probably partially responsible for degradation of ECF sigma factor SigR prime. The chain is ATP-dependent Clp protease proteolytic subunit 1 from Streptomyces coelicolor (strain ATCC BAA-471 / A3(2) / M145).